We begin with the raw amino-acid sequence, 337 residues long: GTPase Obg (337 aa).

The region spanning 1 to 159 (MKFVDSATIS…FELEMELKLM (159 aa)) is the Obg domain. An OBG-type G domain is found at 160–322 (ADVGLVGFPN…LKDELWRQVS (163 aa)). GTP-binding positions include 166–173 (GFPNAGKS), 191–195 (FTTLV), 213–216 (DIPG), 280–283 (TKMD), and 303–305 (SSV). The Mg(2+) site is built by Ser173 and Thr193.

The protein belongs to the TRAFAC class OBG-HflX-like GTPase superfamily. OBG GTPase family. In terms of assembly, monomer. The cofactor is Mg(2+).

Its subcellular location is the cytoplasm. In terms of biological role, an essential GTPase which binds GTP, GDP and possibly (p)ppGpp with moderate affinity, with high nucleotide exchange rates and a fairly low GTP hydrolysis rate. Plays a role in control of the cell cycle, stress response, ribosome biogenesis and in those bacteria that undergo differentiation, in morphogenesis control. This is GTPase Obg from Chlorobium phaeobacteroides (strain DSM 266 / SMG 266 / 2430).